We begin with the raw amino-acid sequence, 264 residues long: Thymidylate synthase (264 aa).

R21 contributes to the dUMP binding site. H51 is a binding site for (6R)-5,10-methylene-5,6,7,8-tetrahydrofolate. Residue 126–127 participates in dUMP binding; it reads RR. Residue C146 is the Nucleophile of the active site. Residues 166 to 169, N177, and 207 to 209 each bind dUMP; these read RSAD and HIY. D169 serves as a coordination point for (6R)-5,10-methylene-5,6,7,8-tetrahydrofolate. S263 lines the (6R)-5,10-methylene-5,6,7,8-tetrahydrofolate pocket.

The protein belongs to the thymidylate synthase family. Bacterial-type ThyA subfamily. As to quaternary structure, homodimer.

It is found in the cytoplasm. The enzyme catalyses dUMP + (6R)-5,10-methylene-5,6,7,8-tetrahydrofolate = 7,8-dihydrofolate + dTMP. It participates in pyrimidine metabolism; dTTP biosynthesis. Its function is as follows. Catalyzes the reductive methylation of 2'-deoxyuridine-5'-monophosphate (dUMP) to 2'-deoxythymidine-5'-monophosphate (dTMP) while utilizing 5,10-methylenetetrahydrofolate (mTHF) as the methyl donor and reductant in the reaction, yielding dihydrofolate (DHF) as a by-product. This enzymatic reaction provides an intracellular de novo source of dTMP, an essential precursor for DNA biosynthesis. The chain is Thymidylate synthase from Bacillus pumilus (strain SAFR-032).